Consider the following 743-residue polypeptide: Capsid protein (743 aa).

A disordered region spans residues 665-706; sequence YVPPEEDFNIQERQQREQRPWTSESESEAEAQEETQAGSVRE.

It belongs to the anelloviridae capsid protein family.

It localises to the virion. Its function is as follows. Self assemble to form an icosahedral capsid. The sequence is that of Capsid protein from Torque teno virus (isolate Human/China/CT39F/2001) (TTV).